We begin with the raw amino-acid sequence, 274 residues long: MSLSETVEPSGIVELAVRRRRGDAAETAVDRVGQEWPVALVFNGISHAVMMCTPRDLEAFAVGFAVSEGIVERGSDVKDIEVALHGAGPLPHAEVQLTVVQQAFAALKEKRRALAGRTGCGVCGIESIGLLDLVPQRLPDTGFLARLAPDAIARAARELPAHQALTRQTGGLHAAAWCDASGAIVHAFEDIGRHNALDKLIGTLTLTRADMANGFVFLSSRASYELVRKSARVGIPMVATISAPSSLAIEIARQAGLRLVSFCREAGYVDYGTA.

Cys-120 acts as the Cysteine persulfide intermediate in catalysis.

The protein belongs to the FdhD family.

Its subcellular location is the cytoplasm. Its function is as follows. Required for formate dehydrogenase (FDH) activity. Acts as a sulfur carrier protein that transfers sulfur from IscS to the molybdenum cofactor prior to its insertion into FDH. In Burkholderia mallei (strain ATCC 23344), this protein is Sulfur carrier protein FdhD.